The sequence spans 508 residues: Photosystem II CP47 reaction center protein (508 aa).

6 helical membrane-spanning segments follow: residues 21 to 36 (SVHIMHTALVSGWAGS), 101 to 115 (IMFSGLCFLAAIWHW), 140 to 156 (GIHLFLSGLACFGFGAF), 203 to 218 (IAAGTLGILAGLFHLS), 237 to 252 (VLSSSIAAVFFAAFVV), and 457 to 472 (SFALLFFFGHIWHGAR).

It belongs to the PsbB/PsbC family. PsbB subfamily. As to quaternary structure, PSII is composed of 1 copy each of membrane proteins PsbA, PsbB, PsbC, PsbD, PsbE, PsbF, PsbH, PsbI, PsbJ, PsbK, PsbL, PsbM, PsbT, PsbX, PsbY, PsbZ, Psb30/Ycf12, at least 3 peripheral proteins of the oxygen-evolving complex and a large number of cofactors. It forms dimeric complexes. It depends on Binds multiple chlorophylls. PSII binds additional chlorophylls, carotenoids and specific lipids. as a cofactor.

It localises to the plastid. The protein localises to the chloroplast thylakoid membrane. In terms of biological role, one of the components of the core complex of photosystem II (PSII). It binds chlorophyll and helps catalyze the primary light-induced photochemical processes of PSII. PSII is a light-driven water:plastoquinone oxidoreductase, using light energy to abstract electrons from H(2)O, generating O(2) and a proton gradient subsequently used for ATP formation. In Ceratophyllum demersum (Rigid hornwort), this protein is Photosystem II CP47 reaction center protein.